We begin with the raw amino-acid sequence, 541 residues long: Chaperonin GroEL (541 aa).

ATP-binding positions include 29-32, 86-90, glycine 413, and aspartate 495; these read TLGP and DGTTT.

In terms of assembly, forms a cylinder of 14 subunits composed of two heptameric rings stacked back-to-back. Interacts with the co-chaperonin GroES.

It is found in the cytoplasm. It carries out the reaction ATP + H2O + a folded polypeptide = ADP + phosphate + an unfolded polypeptide.. Functionally, together with its co-chaperonin GroES, plays an essential role in assisting protein folding. The GroEL-GroES system forms a nano-cage that allows encapsulation of the non-native substrate proteins and provides a physical environment optimized to promote and accelerate protein folding. This is Chaperonin GroEL from Thermoanaerobacter brockii (Thermoanaerobium brockii).